Consider the following 378-residue polypeptide: mRNA cap guanine-N(7) methyltransferase (378 aa).

The 308-residue stretch at 24–331 folds into the mRNA cap 0 methyltransferase domain; sequence SRIFFMRNMN…MYLVFGFRKK (308 aa). Residue 33 to 34 coordinates mRNA; the sequence is NN. Residues lysine 37, alanine 62, aspartate 84, aspartate 116, glutamine 138, and tyrosine 143 each coordinate S-adenosyl-L-methionine. 2 stretches are compositionally biased toward basic and acidic residues: residues 335–347 and 356–378; these read EKNLESEAPEIKK and DTDKTAEKNEERIEEKEENPSHC. The interval 335–378 is disordered; sequence EKNLESEAPEIKKVTPVPLNEDTDKTAEKNEERIEEKEENPSHC.

Belongs to the class I-like SAM-binding methyltransferase superfamily. mRNA cap 0 methyltransferase family.

The protein resides in the nucleus. It catalyses the reaction a 5'-end (5'-triphosphoguanosine)-ribonucleoside in mRNA + S-adenosyl-L-methionine = a 5'-end (N(7)-methyl 5'-triphosphoguanosine)-ribonucleoside in mRNA + S-adenosyl-L-homocysteine. MRNA-capping methyltransferase that methylates the N7 position of the added guanosine to the 5'-cap structure of mRNAs. Binds RNA containing 5'-terminal GpppC. The protein is mRNA cap guanine-N(7) methyltransferase of Caenorhabditis briggsae.